We begin with the raw amino-acid sequence, 330 residues long: Fructose-1,6-bisphosphatase class 1 (330 aa).

Glu-84, Asp-103, Leu-105, and Asp-106 together coordinate Mg(2+). Residues 106–109 (DGSS), Asn-196, and Lys-262 each bind substrate. Glu-268 is a Mg(2+) binding site.

This sequence belongs to the FBPase class 1 family. As to quaternary structure, homotetramer. Mg(2+) serves as cofactor.

The protein localises to the cytoplasm. It catalyses the reaction beta-D-fructose 1,6-bisphosphate + H2O = beta-D-fructose 6-phosphate + phosphate. It participates in carbohydrate biosynthesis; gluconeogenesis. The polypeptide is Fructose-1,6-bisphosphatase class 1 (Shewanella sp. (strain MR-7)).